Reading from the N-terminus, the 382-residue chain is Lipid-A-disaccharide synthase (382 aa).

It belongs to the LpxB family.

It catalyses the reaction 2-N,3-O-bis[(3R)-3-hydroxytetradecanoyl]-alpha-D-glucosaminyl 1-phosphate + UDP-2-N,3-O-bis[(3R)-3-hydroxytetradecanoyl]-alpha-D-glucosamine = lipid A disaccharide (E. coli) + UDP + H(+). The enzyme catalyses a lipid X + a UDP-2-N,3-O-bis[(3R)-3-hydroxyacyl]-alpha-D-glucosamine = a lipid A disaccharide + UDP + H(+). Its pathway is glycolipid biosynthesis; lipid IV(A) biosynthesis; lipid IV(A) from (3R)-3-hydroxytetradecanoyl-[acyl-carrier-protein] and UDP-N-acetyl-alpha-D-glucosamine: step 5/6. Condensation of UDP-2,3-diacylglucosamine and 2,3-diacylglucosamine-1-phosphate to form lipid A disaccharide, a precursor of lipid A, a phosphorylated glycolipid that anchors the lipopolysaccharide to the outer membrane of the cell. In Salmonella arizonae (strain ATCC BAA-731 / CDC346-86 / RSK2980), this protein is Lipid-A-disaccharide synthase.